We begin with the raw amino-acid sequence, 195 residues long: IMP cyclohydrolase (195 aa).

The protein belongs to the archaeal IMP cyclohydrolase family.

It catalyses the reaction IMP + H2O = 5-formamido-1-(5-phospho-D-ribosyl)imidazole-4-carboxamide. It functions in the pathway purine metabolism; IMP biosynthesis via de novo pathway; IMP from 5-formamido-1-(5-phospho-D-ribosyl)imidazole-4-carboxamide: step 1/1. In terms of biological role, catalyzes the cyclization of 5-formylamidoimidazole-4-carboxamide ribonucleotide to IMP. The chain is IMP cyclohydrolase from Haloquadratum walsbyi (strain DSM 16790 / HBSQ001).